The sequence spans 43 residues: METANLVTISISCLLVSLTGYAIYTSFGRPSEQLKDPFEDHED.

Residues 5 to 27 (NLVTISISCLLVSLTGYAIYTSF) traverse the membrane as a helical segment.

It belongs to the PsbN family.

Its subcellular location is the plastid. The protein localises to the chloroplast thylakoid membrane. May play a role in photosystem I and II biogenesis. This Gnetum gnemon (Spanish joint-fir) protein is Protein PsbN.